The chain runs to 1337 residues: C-Jun-amino-terminal kinase-interacting protein 3 (1337 aa).

The RH1 domain maps to 12 to 100; that stretch reads VVVYQDDYCS…LTQYEREKAL (89 aa). The interval 50–80 is kinesin-binding domain (KBD); essential for its function in axon elongation; sequence EVVKELMPLVVNVLENLDSVLSENQEHEVEL. A coiled-coil region spans residues 58 to 177; it reads LVVNVLENLD…HTEMIQTYVE (120 aa). 2 disordered regions span residues 183-211 and 245-285; these read KMQQVGGSGQTESSLPGRSRKERPTSLNV and SSSY…PSAA. Positions 184–198 are enriched in polar residues; it reads MQQVGGSGQTESSLP. The segment at 210–226 is JNK-binding domain (JBD); essential for its function in axon elongation; the sequence is NVFPLADGMVRAQMGGK. Low complexity predominate over residues 261–270; the sequence is SSAAATPSTT. A phosphothreonine; by MAPK mark is found at threonine 266, threonine 276, and threonine 287. The segment covering 271–282 has biased composition (polar residues); it reads GTKSNTPTSSVP. Phosphoserine; by ROCK1 is present on residues serine 315 and serine 365. Serine 366 bears the Phosphoserine mark. The leucine zipper-like domain (LZ); essential for its function in axon elongation stretch occupies residues 424 to 459; that stretch reads LLLENSQLLETKNALNVVKNDLIAKVDQLSGEQEVL. Residues 437-555 adopt a coiled-coil conformation; the sequence is ALNVVKNDLI…LQEAVRWTEM (119 aa). Residues 459-515 are interaction with NTRK2; it reads LKGELEAAKQAKVKLENRIKELEEELKRVKSEAVTARREPREEVEDVSSYLCTELDK. Residues 521–595 form the RH2 domain; sequence RRRFTRVEMA…SPPPAKRSYP (75 aa). Position 603 is a phosphoserine (serine 603). Positions 633 to 655 are disordered; that stretch reads DDCTSSARREQKREQYRQVREHV. Positions 639 to 655 are enriched in basic and acidic residues; sequence ARREQKREQYRQVREHV. A Phosphoserine modification is found at serine 677. Disordered stretches follow at residues 719–772 and 859–966; these read WKPH…ATSS and PRSN…TTTS. Basic and acidic residues predominate over residues 739–765; sequence LTCDREGEGEPKSTHPSPEKKKAKETP. 2 stretches are compositionally biased toward polar residues: residues 879–892 and 941–952; these read VATTANGKVNPSQS and ENGSESNGTIVQ.

Belongs to the JIP scaffold family. Forms homo- or heterooligomeric complexes. The central region of MAPK8IP3 interacts with the C-terminal of MAPK8IP2 but not MAPK8IP1. Binds specific components of the JNK signaling pathway namely MAPK8/JNK1, MAPK9/JNK2 and MAPK10/JNK3 to the N-terminal region, MAP2K4/MKK4 and MAP2K7/MKK7 to the central region and MAP3K11 to the C-terminal region. Binds the TPR motif-containing C-terminal of kinesin light chain, KLC1. Pre-assembled MAPK8IP1 scaffolding complexes are then transported as a cargo of kinesin, to the required subcellular location. Interacts with ROCK1 and this interaction is enhanced by ultraviolet-B (UVB) radiation. Interacts with SH3RF2. Interacts with NTRK2/TRKB and NTRK3/TRKC. In terms of processing, phosphorylation by ROCK1 is crucial for the recruitment of JNK. In terms of tissue distribution, highly expressed throughout many regions of the brain and at lower levels in the heart, liver, lung, testes and kidney. All isoforms have been identified in the brain, isoform 1a is also expressed in the spleen and lung.

The protein localises to the cytoplasm. It localises to the golgi apparatus. Its subcellular location is the cytoplasmic vesicle. The protein resides in the cell projection. It is found in the growth cone. The protein localises to the axon. It localises to the dendrite. Its subcellular location is the perinuclear region. In terms of biological role, the JNK-interacting protein (JIP) group of scaffold proteins selectively mediates JNK signaling by aggregating specific components of the MAPK cascade to form a functional JNK signaling module. May function as a regulator of vesicle transport, through interactions with the JNK-signaling components and motor proteins. Promotes neuronal axon elongation in a kinesin- and JNK-dependent manner. Activates cofilin at axon tips via local activation of JNK, thereby regulating filopodial dynamics and enhancing axon elongation. Its binding to kinesin heavy chains (KHC), promotes kinesin-1 motility along microtubules and is essential for axon elongation and regeneration. Regulates cortical neuronal migration by mediating NTRK2/TRKB anterograde axonal transport during brain development. Acts as an adapter that bridges the interaction between NTRK2/TRKB and KLC1 and drives NTRK2/TRKB axonal but not dendritic anterograde transport, which is essential for subsequent BDNF-triggered signaling and filopodia formation. The polypeptide is C-Jun-amino-terminal kinase-interacting protein 3 (Mapk8ip3) (Mus musculus (Mouse)).